A 516-amino-acid chain; its full sequence is MLTWLEQFLIRYPELALFLVIAAGYWIGSFKIGAFSLGPVTGALFAGLVVGDFAHVPVSSMTKSFLFLLFLFGVGYSVGPQFVQAMKRDGLKPVLLAVVVCLTGLAAAIAVGRILGLDPGFAAGLMSGSLSQSAAMGTATDAVNGLAVPEAQRALYISHIAVADAVCYIFGYAGVIMWCTVVAPALLKIDLRDEALKLERSLGMSRAKPGLASAWRKFELRAYRLDEHSPLIGSTVAAAEARPEHRLFIHRIRRGERVLQAEPGTILAPGDVITISAPRQIIVELIGSRAEEVEDRELLDIPLISADVFLINAKLAGMNLQEASQQDWTHGLYLRSLSRGGQELPIAPGVVLQRGDLLRIVGPEPVVENAAKNIGVIVAPSNSIDFVVLGLAIFFGGVVGVLVSFPVGSIKIALSTSVGTLLAGLLVGHLRTLDPRFGRIPDGAISLMTSLGLAAFVGLTGIHAGPIFLSALRDSGISLLLGGMVVTLLPQIVGFCFGHFVLRMNPILLLGGLTGA.

5 consecutive transmembrane segments (helical) span residues 10–27, 32–54, 64–83, 95–117, and 165–187; these read IRYP…GYWI, IGAF…GDFA, SFLF…PQFV, LLAV…ILGL, and AVCY…PALL. RCK C-terminal domains follow at residues 208 to 291 and 296 to 376; these read KPGL…SRAE and RELL…NIGV. 4 helical membrane-spanning segments follow: residues 386–408, 412–430, 443–465, and 480–502; these read FVVL…FPVG, IALS…VGHL, GAIS…IHAG, and LLGG…HFVL.

It belongs to the AAE transporter (TC 2.A.81) family.

It localises to the cell membrane. This is an uncharacterized protein from Bradyrhizobium diazoefficiens (strain JCM 10833 / BCRC 13528 / IAM 13628 / NBRC 14792 / USDA 110).